The chain runs to 419 residues: Enolase (419 aa).

Gln-161 contributes to the (2R)-2-phosphoglycerate binding site. The active-site Proton donor is the Glu-205. Mg(2+) contacts are provided by Asp-240, Glu-283, and Asp-309. Residues Lys-334, Arg-363, Ser-364, and Lys-385 each contribute to the (2R)-2-phosphoglycerate site. Lys-334 serves as the catalytic Proton acceptor.

It belongs to the enolase family. The cofactor is Mg(2+).

The protein localises to the cytoplasm. Its subcellular location is the secreted. The protein resides in the cell surface. The catalysed reaction is (2R)-2-phosphoglycerate = phosphoenolpyruvate + H2O. The protein operates within carbohydrate degradation; glycolysis; pyruvate from D-glyceraldehyde 3-phosphate: step 4/5. Its function is as follows. Catalyzes the reversible conversion of 2-phosphoglycerate (2-PG) into phosphoenolpyruvate (PEP). It is essential for the degradation of carbohydrates via glycolysis. The polypeptide is Enolase (Saccharolobus islandicus (strain Y.G.57.14 / Yellowstone #1) (Sulfolobus islandicus)).